Reading from the N-terminus, the 630-residue chain is Alpha-1,3-mannosyltransferase MNT3 (630 aa).

Residues 1-14 (MLKSLKSRRLILKR) are Cytoplasmic-facing. The chain crosses the membrane as a helical; Signal-anchor for type II membrane protein span at residues 15–31 (LVTLLLSLFFSYLIFSA). The Lumenal segment spans residues 32-630 (SRNVTSSNKL…NDISRTWNAN (599 aa)). 2 N-linked (GlcNAc...) asparagine glycosylation sites follow: asparagine 34 and asparagine 168.

Belongs to the MNN1/MNT family.

It is found in the golgi apparatus membrane. The protein operates within protein modification; protein glycosylation. Mannosyltransferase involved in adding the 4th and 5th mannose residues of O-linked glycans. This is Alpha-1,3-mannosyltransferase MNT3 (MNT3) from Saccharomyces cerevisiae (strain ATCC 204508 / S288c) (Baker's yeast).